A 189-amino-acid chain; its full sequence is HGPRTase-like protein (189 aa).

Belongs to the purine/pyrimidine phosphoribosyltransferase family. Archaeal HPRT subfamily.

Its function is as follows. May catalyze a purine salvage reaction, the substrate is unknown. The protein is HGPRTase-like protein of Halorhabdus utahensis (strain DSM 12940 / JCM 11049 / AX-2).